A 122-amino-acid chain; its full sequence is Large ribosomal subunit protein uL14 (122 aa).

The protein belongs to the universal ribosomal protein uL14 family. Part of the 50S ribosomal subunit. Forms a cluster with proteins L3 and L19. In the 70S ribosome, L14 and L19 interact and together make contacts with the 16S rRNA in bridges B5 and B8.

Its function is as follows. Binds to 23S rRNA. Forms part of two intersubunit bridges in the 70S ribosome. This is Large ribosomal subunit protein uL14 from Chlorobium phaeovibrioides (strain DSM 265 / 1930) (Prosthecochloris vibrioformis (strain DSM 265)).